We begin with the raw amino-acid sequence, 1069 residues long: Receptor-type guanylate cyclase gcy-29 (1069 aa).

The N-terminal stretch at 1–23 (MLPNFWNFQFIFVIFCWIPIVVS) is a signal peptide. Topologically, residues 24-458 (DEKIVLKIGS…FREENCDYTQ (435 aa)) are extracellular. Residues Asn161, Asn240, and Asn407 are each glycosylated (N-linked (GlcNAc...) asparagine). The chain crosses the membrane as a helical span at residues 459–479 (TIVIATAVVCIILTVFLGIWL). The Cytoplasmic segment spans residues 480 to 1069 (RRACETSALD…FKKKNNTFDF (590 aa)). Residues 497 to 806 (RDDVQILDEE…RVRLATEIAL (310 aa)) form the Protein kinase domain. Residues 503–511 (LDEEQVKSV) and Lys527 contribute to the ATP site. The 131-residue stretch at 876 to 1006 (TVMFSDIVGF…ETVNIAAVME (131 aa)) folds into the Guanylate cyclase domain. Mg(2+)-binding residues include Asp881, Ile882, and Asp925.

The protein belongs to the adenylyl cyclase class-4/guanylyl cyclase family. As to expression, expressed bilaterally in ASE and AFD sensory neurons.

It is found in the cell membrane. It carries out the reaction GTP = 3',5'-cyclic GMP + diphosphate. Functionally, guanylate cyclase involved in the production of the second messenger cGMP. The sequence is that of Receptor-type guanylate cyclase gcy-29 from Caenorhabditis elegans.